The sequence spans 515 residues: UPF0053 protein BUsg_314 (515 aa).

Transmembrane regions (helical) follow at residues 14–34 (LTLV…VAIL), 49–69 (IGLG…SWVV), 79–99 (NFFS…FLLF), 125–145 (FWAV…DAII), 150–170 (MVNQ…LMLL), 185–205 (VVVL…AEAL), and 207–227 (FYIP…IEIF). CBS domains lie at 309–368 (MTPR…NIDV) and 372–432 (ASQI…DADE).

This sequence belongs to the UPF0053 family.

Its subcellular location is the cell membrane. The polypeptide is UPF0053 protein BUsg_314 (Buchnera aphidicola subsp. Schizaphis graminum (strain Sg)).